The following is a 242-amino-acid chain: Probable 2-phosphosulfolactate phosphatase (242 aa).

It belongs to the ComB family. The cofactor is Mg(2+).

It carries out the reaction (2R)-O-phospho-3-sulfolactate + H2O = (2R)-3-sulfolactate + phosphate. In Prochlorococcus marinus (strain NATL2A), this protein is Probable 2-phosphosulfolactate phosphatase.